The sequence spans 393 residues: Tryptophan 2,3-dioxygenase (393 aa).

Residues 56–60 (FIVTH) and Arg-127 contribute to the substrate site. Heme is bound at residue His-312. A substrate-binding site is contributed by Thr-327.

This sequence belongs to the tryptophan 2,3-dioxygenase family. As to quaternary structure, homotetramer. Dimer of dimers. Requires heme as cofactor.

The catalysed reaction is L-tryptophan + O2 = N-formyl-L-kynurenine. The protein operates within amino-acid degradation; L-tryptophan degradation via kynurenine pathway; L-kynurenine from L-tryptophan: step 1/2. It functions in the pathway pigment biosynthesis; ommochrome biosynthesis. Its activity is regulated as follows. Stimulated by low concentrations of hydrogen peroxide (5 uM), ascorbate (0.1-0.3 mM), and sodium hydrosulfite (0.1 mM). Inhibited by high concentrations of hydrogen peroxide (0.1 mM), ascorbate (10 mM), and sodium hydrosulfite (1 mM). In terms of biological role, heme-dependent dioxygenase that catalyzes the oxidative cleavage of the L-tryptophan (L-Trp) pyrrole ring and converts L-tryptophan to N-formyl-L-kynurenine. Catalyzes the oxidative cleavage of the indole moiety. The protein is Tryptophan 2,3-dioxygenase of Aedes aegypti (Yellowfever mosquito).